Reading from the N-terminus, the 241-residue chain is Platelet-derived growth factor subunit B (241 aa).

The N-terminal stretch at 1–20 (MNRCWALFLSLCCYLRLVSA) is a signal peptide. Positions 21 to 81 (EGDPIPEELY…ELESLSRGRR (61 aa)) are cleaved as a propeptide — removed in mature form. Asn-63 carries an N-linked (GlcNAc...) asparagine glycan. Cystine bridges form between Cys-97-Cys-141, Cys-130-Cys-178, and Cys-134-Cys-180. Positions 191-241 (TPGSSQEQRAARTPQTRVTIRTVRVRRPPKGKHRKFKHTHDKTALKETLGA) are cleaved as a propeptide — removed in mature form. The span at 217–230 (RPPKGKHRKFKHTH) shows a compositional bias: basic residues. The tract at residues 217 to 241 (RPPKGKHRKFKHTHDKTALKETLGA) is disordered.

This sequence belongs to the PDGF/VEGF growth factor family. Antiparallel homodimer; disulfide-linked. Antiparallel heterodimer with PDGFA; disulfide-linked. The PDGFB homodimer interacts with PDGFRA and PDGFRB homodimers, and with heterodimers formed by PDGFRA and PDGFRB. The heterodimer composed of PDGFA and PDGFB interacts with PDGFRB homodimers, and with heterodimers formed by PDGFRA and PDGFRB. Interacts with XLKD1. Interacts with LRP1. Interacts with SORL1 (via the N-terminal ectodomain). Interacts with CD82; this interaction inhibits PDGFB-mediated signaling pathway.

It localises to the secreted. Its function is as follows. Growth factor that plays an essential role in the regulation of embryonic development, cell proliferation, cell migration, survival and chemotaxis. Potent mitogen for cells of mesenchymal origin. Required for normal proliferation and recruitment of pericytes and vascular smooth muscle cells in the central nervous system, skin, lung, heart and placenta. Required for normal blood vessel development, and for normal development of kidney glomeruli. Plays an important role in wound healing. Signaling is modulated by the formation of heterodimers with PDGFA. This chain is Platelet-derived growth factor subunit B (PDGFB), found in Ovis aries (Sheep).